Reading from the N-terminus, the 634-residue chain is Kelch-like protein 22 (634 aa).

Ala2 is modified (N-acetylalanine). The region spanning 50–117 (FDVVLVVEGK…IYTSELELSL (68 aa)) is the BTB domain. 6 Kelch repeats span residues 299–349 (CVVG…VLNN), 350–399 (FVYL…VVGK), 400–446 (YIYA…TLQG), 448–493 (MYIT…ALLD), 495–544 (LFVI…VLDS), and 545–593 (RIYV…VLTL). Phosphothreonine is present on Thr463. Phosphotyrosine is present on Tyr466. Thr475 is modified (phosphothreonine). Positions 600–634 (EQPRGTPNRSQADADFASEVMSVSDWEEFDNSSED) are disordered. Thr605 carries the post-translational modification Phosphothreonine. The segment covering 624–634 (DWEEFDNSSED) has biased composition (acidic residues).

In terms of assembly, component of the BCR(KLHL22) E3 ubiquitin ligase complex, at least composed of CUL3, KLHL22 and RBX1. Interacts with PLK1. Interacts with DEPDC5 (via DEP domain); the interaction depends on amino acid availability. Interacts with YWHAE; required for the nuclear localization of KLHL22 upon amino acid starvation.

The protein localises to the cytoplasm. It is found in the cytosol. It localises to the cytoskeleton. The protein resides in the microtubule organizing center. Its subcellular location is the centrosome. The protein localises to the spindle. It is found in the nucleus. It localises to the lysosome. It participates in protein modification; protein ubiquitination. In terms of biological role, substrate-specific adapter of a BCR (BTB-CUL3-RBX1) E3 ubiquitin ligase complex required for chromosome alignment and localization of PLK1 at kinetochores. The BCR(KLHL22) ubiquitin ligase complex mediates monoubiquitination of PLK1, leading to PLK1 dissociation from phosphoreceptor proteins and subsequent removal from kinetochores, allowing silencing of the spindle assembly checkpoint (SAC) and chromosome segregation. Monoubiquitination of PLK1 does not lead to PLK1 degradation. The BCR(KLHL22) ubiquitin ligase complex is also responsible for the amino acid-stimulated 'Lys-48' polyubiquitination and proteasomal degradation of DEPDC5. Through the degradation of DEPDC5, releases the GATOR1 complex-mediated inhibition of the TORC1 pathway. It is therefore an amino acid-dependent activator within the amino acid-sensing branch of the TORC1 pathway, indirectly regulating different cellular processes including cell growth and autophagy. In Mus musculus (Mouse), this protein is Kelch-like protein 22.